The chain runs to 117 residues: MPLYEHVMIARQDLSNSQAEGLIEHFGAVLSDNGGKLVDQEYWGVKTMAYKINKNRKGHYAFLRSDAPSSAVQEMERLMRLHDDVMRVLTIKVEEHAEGPSVQMQKRDERDNRRERR.

A disordered region spans residues 96-117 (HAEGPSVQMQKRDERDNRRERR). Positions 105–117 (QKRDERDNRRERR) are enriched in basic and acidic residues.

The protein belongs to the bacterial ribosomal protein bS6 family.

Binds together with bS18 to 16S ribosomal RNA. This Ruegeria sp. (strain TM1040) (Silicibacter sp.) protein is Small ribosomal subunit protein bS6.